The following is a 478-amino-acid chain: Receptor-interacting serine/threonine-protein kinase 3 (478 aa).

Ser-2 bears the Phosphoserine mark. In terms of domain architecture, Protein kinase spans 22–290 (LENLGFVGKG…CESKTNNVYI (269 aa)). ATP is bound by residues 28-36 (VGKGGFGAV) and Lys-51. Catalysis depends on Asp-143, which acts as the Proton acceptor. Phosphoserine is present on Ser-165. At Thr-185 the chain carries Phosphothreonine. Ser-201 bears the Phosphoserine; by autocatalysis mark. Position 228 is a phosphothreonine (Thr-228). Ser-229 bears the Phosphoserine; by autocatalysis mark. Thr-254 is modified (phosphothreonine). A phosphoserine mark is found at Ser-301 and Ser-323. The tract at residues 311-330 (RSSDTKLSARESSQKGTEVD) is disordered. A compositionally biased stretch (basic and acidic residues) spans 313 to 330 (SDTKLSARESSQKGTEVD). Thr-335 is modified (phosphothreonine). A phosphoserine mark is found at Ser-350, Ser-369, and Ser-380. Positions 362–429 (ERRGKEASFG…RNSNPWYTWN (68 aa)) are disordered. Residues 376–385 (AGTSSDTLAG) show a composition bias toward polar residues. At Thr-392 the chain carries Phosphothreonine. Residues 413 to 429 (QRNQGDGRNSNPWYTWN) show a composition bias toward polar residues. The RIP homotypic interaction motif (RHIM) motif lies at 437-461 (LQSIVLNNCSEVQIGQHNCMSVQPR). Residue Arg-474 is modified to Omega-N-methylarginine.

It belongs to the protein kinase superfamily. TKL Ser/Thr protein kinase family. As to quaternary structure, interacts (via RIP homotypic interaction motif) with RIPK1 (via RIP homotypic interaction motif); this interaction induces RIPK1 phosphorylation and formation of a RIPK1-RIPK3 necrosis-inducing complex. Interacts with MLKL; the interaction is direct and triggers necroptosis. Interacts with ZBP1 (via RIP homotypic interaction motif); interaction with ZBP1 activates RIPK3, triggering necroptosis. Upon TNF-induced necrosis, the RIPK1-RIPK3 dimer further interacts with PGAM5 and MLKL; the formation of this complex leads to PGAM5 phosphorylation and increase in PGAM5 phosphatase activity. Binds TRAF2 and is recruited to the TNFR-1 signaling complex. Interacts with PYGL, GLUL and GLUD1; these interactions result in activation of these metabolic enzymes. Interacts with BIRC2/c-IAP1, BIRC3/c-IAP2 and XIAP/BIRC4. Interacts with ARHGEF2. Interacts with PELI1 (via atypical FHA domain); the phosphorylated form at Thr-185 binds preferentially to PELI1. Interacts with BUB1B, TRAF2 and STUB1. Interacts with CASP6. Component of the AIM2 PANoptosome complex, a multiprotein complex that drives inflammatory cell death (PANoptosis). Post-translationally, RIPK1 and RIPK3 undergo reciprocal auto- and trans-phosphorylation. Autophosphorylated following interaction with ZBP1. Phosphorylation of Ser-201 plays a role in the necroptotic function of RIPK3. Autophosphorylates at Thr-228 and Ser-229 following activation by ZBP1: phosphorylation at these sites is a hallmark of necroptosis and is required for binding MLKL. Phosphorylation at Thr-185 is important for its kinase activity, interaction with PELI1 and for its ability to mediate TNF-induced necroptosis. In terms of processing, polyubiquitinated with 'Lys-48' and 'Lys-63'-linked chains by BIRC2/c-IAP1 and BIRC3/c-IAP2, leading to activation of NF-kappa-B. Ubiquitinated by STUB1 leading to its subsequent proteasome-dependent degradation.

The protein localises to the cytoplasm. The protein resides in the cytosol. It is found in the nucleus. It carries out the reaction L-seryl-[protein] + ATP = O-phospho-L-seryl-[protein] + ADP + H(+). It catalyses the reaction L-threonyl-[protein] + ATP = O-phospho-L-threonyl-[protein] + ADP + H(+). Its activity is regulated as follows. Activity is stimulated by ZBP1, which senses double-stranded Z-RNA structures. RIPK3-dependent necroptosis is inhibited by RIPK1: RIPK1 prevents the ZBP1-induced activation of RIPK3 via FADD-mediated recruitment of CASP8, which cleaves RIPK1 and limits TNF-induced necroptosis. Serine/threonine-protein kinase that activates necroptosis and apoptosis, two parallel forms of cell death. Necroptosis, a programmed cell death process in response to death-inducing TNF-alpha family members, is triggered by RIPK3 following activation by ZBP1. Activated RIPK3 forms a necrosis-inducing complex and mediates phosphorylation of MLKL, promoting MLKL localization to the plasma membrane and execution of programmed necrosis characterized by calcium influx and plasma membrane damage. In addition to TNF-induced necroptosis, necroptosis can also take place in the nucleus in response to orthomyxoviruses infection: following ZBP1 activation, which senses double-stranded Z-RNA structures, nuclear RIPK3 catalyzes phosphorylation and activation of MLKL, promoting disruption of the nuclear envelope and leakage of cellular DNA into the cytosol. Also regulates apoptosis: apoptosis depends on RIPK1, FADD and CASP8, and is independent of MLKL and RIPK3 kinase activity. Phosphorylates RIPK1: RIPK1 and RIPK3 undergo reciprocal auto- and trans-phosphorylation. In some cell types, also able to restrict viral replication by promoting cell death-independent responses. In response to flavivirus infection in neurons, promotes a cell death-independent pathway that restricts viral replication: together with ZBP1, promotes a death-independent transcriptional program that modifies the cellular metabolism via up-regulation expression of the enzyme ACOD1/IRG1 and production of the metabolite itaconate. Itaconate inhibits the activity of succinate dehydrogenase, generating a metabolic state in neurons that suppresses replication of viral genomes. RIPK3 binds to and enhances the activity of three metabolic enzymes: GLUL, GLUD1, and PYGL. These metabolic enzymes may eventually stimulate the tricarboxylic acid cycle and oxidative phosphorylation, which could result in enhanced ROS production. The protein is Receptor-interacting serine/threonine-protein kinase 3 of Rattus norvegicus (Rat).